The chain runs to 483 residues: Endoplasmic reticulum lectin 1 (483 aa).

Positions 1-33 (MEEGDGGLRSLVPGGPLLLVLYGLLEASGGGRA) are cleaved as a signal peptide. MRH domains follow at residues 111 to 246 (SSCS…LCSH) and 342 to 469 (SYCF…ICKI). A disulfide bridge connects residues C113 and C126. N195 carries N-linked (GlcNAc...) asparagine glycosylation. 5 cysteine pairs are disulfide-bonded: C199–C232, C215–C244, C344–C357, C421–C455, and C436–C467.

As to quaternary structure, may form a complex with OS9, HSPA5, SYVN1, and SEL1L with which it interacts directly. Interacts (via PRKCSH 2 domain) with KREMEN2 (when glycosylated). Interacts with HSPA5. In terms of processing, N-glycosylated.

It is found in the endoplasmic reticulum lumen. Its function is as follows. Probable lectin that binds selectively to improperly folded lumenal proteins. May function in endoplasmic reticulum quality control and endoplasmic reticulum-associated degradation (ERAD) of both non-glycosylated proteins and glycoproteins. This chain is Endoplasmic reticulum lectin 1 (Erlec1), found in Mus musculus (Mouse).